The following is a 352-amino-acid chain: Protein RecA (352 aa).

ATP is bound at residue 67–74; sequence GPESSGKT.

The protein belongs to the RecA family.

Its subcellular location is the cytoplasm. Functionally, can catalyze the hydrolysis of ATP in the presence of single-stranded DNA, the ATP-dependent uptake of single-stranded DNA by duplex DNA, and the ATP-dependent hybridization of homologous single-stranded DNAs. It interacts with LexA causing its activation and leading to its autocatalytic cleavage. The protein is Protein RecA of Aggregatibacter actinomycetemcomitans (Actinobacillus actinomycetemcomitans).